Consider the following 375-residue polypeptide: Chaperone protein DnaJ (375 aa).

Positions 5–70 (DFYETLGVAK…QKRAAYDRYG (66 aa)) constitute a J domain. A CR-type zinc finger spans residues 136–214 (GKTAQIRVPT…CHGQGRVTEE (79 aa)). Cys-149, Cys-152, Cys-166, Cys-169, Cys-188, Cys-191, Cys-202, and Cys-205 together coordinate Zn(2+). 4 CXXCXGXG motif repeats span residues 149–156 (CDVCSGSG), 166–173 (CGTCQGSG), 188–195 (CPTCHGRG), and 202–209 (CPKCHGQG).

It belongs to the DnaJ family. As to quaternary structure, homodimer. Zn(2+) is required as a cofactor.

It localises to the cytoplasm. Participates actively in the response to hyperosmotic and heat shock by preventing the aggregation of stress-denatured proteins and by disaggregating proteins, also in an autonomous, DnaK-independent fashion. Unfolded proteins bind initially to DnaJ; upon interaction with the DnaJ-bound protein, DnaK hydrolyzes its bound ATP, resulting in the formation of a stable complex. GrpE releases ADP from DnaK; ATP binding to DnaK triggers the release of the substrate protein, thus completing the reaction cycle. Several rounds of ATP-dependent interactions between DnaJ, DnaK and GrpE are required for fully efficient folding. Also involved, together with DnaK and GrpE, in the DNA replication of plasmids through activation of initiation proteins. This chain is Chaperone protein DnaJ, found in Rhizobium etli (strain CIAT 652).